The following is a 503-amino-acid chain: Probable DNA ligase (503 aa).

D212 lines the ATP pocket. K214 functions as the N6-AMP-lysine intermediate in the catalytic mechanism. 6 residues coordinate ATP: R219, R234, E263, F296, R368, and K374.

It belongs to the ATP-dependent DNA ligase family. The cofactor is Mg(2+).

It catalyses the reaction ATP + (deoxyribonucleotide)n-3'-hydroxyl + 5'-phospho-(deoxyribonucleotide)m = (deoxyribonucleotide)n+m + AMP + diphosphate.. DNA ligase that seals nicks in double-stranded DNA during DNA replication, DNA recombination and DNA repair. This is Probable DNA ligase from Kineococcus radiotolerans (strain ATCC BAA-149 / DSM 14245 / SRS30216).